Reading from the N-terminus, the 393-residue chain is NAD(P)H-quinone oxidoreductase subunit H, chloroplastic (393 aa).

It belongs to the complex I 49 kDa subunit family. As to quaternary structure, NDH is composed of at least 16 different subunits, 5 of which are encoded in the nucleus.

The protein localises to the plastid. Its subcellular location is the chloroplast thylakoid membrane. It catalyses the reaction a plastoquinone + NADH + (n+1) H(+)(in) = a plastoquinol + NAD(+) + n H(+)(out). The catalysed reaction is a plastoquinone + NADPH + (n+1) H(+)(in) = a plastoquinol + NADP(+) + n H(+)(out). Its function is as follows. NDH shuttles electrons from NAD(P)H:plastoquinone, via FMN and iron-sulfur (Fe-S) centers, to quinones in the photosynthetic chain and possibly in a chloroplast respiratory chain. The immediate electron acceptor for the enzyme in this species is believed to be plastoquinone. Couples the redox reaction to proton translocation, and thus conserves the redox energy in a proton gradient. The polypeptide is NAD(P)H-quinone oxidoreductase subunit H, chloroplastic (Solanum bulbocastanum (Wild potato)).